The sequence spans 817 residues: Trehalose-phosphatase (817 aa).

Residues Met-1–Ile-547 are glycosyltransferase.

This sequence in the N-terminal section; belongs to the glycosyltransferase 20 family. In the C-terminal section; belongs to the trehalose phosphatase family. Component of the trehalose synthase complex that contains at least tps1, ntp1, and tpp1. Interacts with tps1. Interacts with ntp1. Mg(2+) serves as cofactor.

It carries out the reaction alpha,alpha-trehalose 6-phosphate + H2O = alpha,alpha-trehalose + phosphate. Its pathway is carbohydrate biosynthesis. Phosphatase catalytic subunit of the trehalose synthase complex that catalyzes the production of trehalose from glucose-6-phosphate and UDP-alpha-D-glucose in a two step process. The disaccharide trehalose serves as a storage carbohydrate that is mobilized during nutrient stress and spore germination. Together with ntp1, regulates the level of trehalose as a protectant for cell integrity during thermal, osmotic, and oxidative stress. This Schizosaccharomyces pombe (strain 972 / ATCC 24843) (Fission yeast) protein is Trehalose-phosphatase.